Reading from the N-terminus, the 313-residue chain is Ribosomal RNA small subunit methyltransferase H (313 aa).

S-adenosyl-L-methionine-binding positions include 35 to 37 (GGH), aspartate 55, phenylalanine 81, aspartate 103, and glutamine 110.

It belongs to the methyltransferase superfamily. RsmH family.

The protein localises to the cytoplasm. It carries out the reaction cytidine(1402) in 16S rRNA + S-adenosyl-L-methionine = N(4)-methylcytidine(1402) in 16S rRNA + S-adenosyl-L-homocysteine + H(+). Functionally, specifically methylates the N4 position of cytidine in position 1402 (C1402) of 16S rRNA. In Pseudomonas aeruginosa (strain ATCC 15692 / DSM 22644 / CIP 104116 / JCM 14847 / LMG 12228 / 1C / PRS 101 / PAO1), this protein is Ribosomal RNA small subunit methyltransferase H.